Here is a 1029-residue protein sequence, read N- to C-terminus: Serine/threonine-protein kinase KSP1 (1029 aa).

The region spanning 18–351 (YQKIEDISEG…TELQNLSEYT (334 aa)) is the Protein kinase domain. ATP is bound by residues 27-35 (GSYGYVSLA) and Lys-47. A compositionally biased stretch (acidic residues) spans 56–79 (GQYDGPQDDENDCDSSDCDDDEDT). The tract at residues 56–105 (GQYDGPQDDENDCDSSDCDDDEDTKVDTDRHENENGNASSNNGSSREKKH) is disordered. Residues 80 to 89 (KVDTDRHENE) show a composition bias toward basic and acidic residues. A compositionally biased stretch (low complexity) spans 90 to 99 (NGNASSNNGS). The active-site Proton acceptor is the Asp-207. The interval 377-397 (VPPSSAPVSLPTPISSSNKQH) is disordered. Phosphoserine occurs at positions 416 and 419. A phosphothreonine mark is found at Thr-501, Thr-504, and Thr-526. Residue Ser-529 is modified to Phosphoserine. The interval 532 to 570 (HRYMEGFSNNNNKQYRQNRNYNNNNNNSNNNHGSNYNNF) is disordered. Over residues 538–570 (FSNNNNKQYRQNRNYNNNNNNSNNNHGSNYNNF) the composition is skewed to low complexity. Residue Ser-646 is modified to Phosphoserine. Residues 732 to 824 (STNHNNNGNN…SDSKELEQER (93 aa)) form a disordered region. The span at 734 to 743 (NHNNNGNNNH) shows a compositional bias: low complexity. The segment covering 744-754 (IDTNSTTNQYH) has biased composition (polar residues). Over residues 813–824 (HSSDSKELEQER) the composition is skewed to basic and acidic residues. Phosphoserine is present on residues Ser-845 and Ser-884. Residues 949–978 (EYEGESDKMAHGKMEGGDNESSSTSPDERQ) are disordered. A compositionally biased stretch (basic and acidic residues) spans 953 to 964 (ESDKMAHGKMEG). Residue Thr-1005 is modified to Phosphothreonine. At Ser-1014 the chain carries Phosphoserine.

The protein belongs to the protein kinase superfamily. Ser/Thr protein kinase family. CK2 subfamily. In terms of processing, phosphorylated by PKA in a TORC1-dependent manner. Phosphorylation at PKA consensus sites RRxS/T decreases upon rapamycin treatment.

The protein localises to the nucleus. The enzyme catalyses L-seryl-[protein] + ATP = O-phospho-L-seryl-[protein] + ADP + H(+). The catalysed reaction is L-threonyl-[protein] + ATP = O-phospho-L-threonyl-[protein] + ADP + H(+). In terms of biological role, may act on PRP20. The protein is Serine/threonine-protein kinase KSP1 (KSP1) of Saccharomyces cerevisiae (strain ATCC 204508 / S288c) (Baker's yeast).